A 361-amino-acid chain; its full sequence is POU domain, class 3, transcription factor 4 (361 aa).

Disordered regions lie at residues 99-131 (PHVAHHSPHTNHPNAWGASPAPNSSITNSGQPL) and 144-192 (MLEH…PTSD). The segment covering 119-131 (APNSSITNSGQPL) has biased composition (polar residues). The span at 165–183 (VLREPPDHGELGSHHCQDH) shows a compositional bias: basic and acidic residues. The region spanning 186–260 (EETPTSDELE…LLNKWLEEAD (75 aa)) is the POU-specific domain. Ser-265 carries the post-translational modification Phosphoserine. Residues 278 to 337 (KRKKRTSIEVSVKGVLETHFLKCPKPAAQEISSLADSLQLEKEVVRVWFCNRRQKEKRMT) constitute a DNA-binding region (homeobox). The tract at residues 334-361 (KRMTPPGDQQPHEVYSHTVKTDASCHDL) is disordered. A compositionally biased stretch (basic and acidic residues) spans 343–361 (QPHEVYSHTVKTDASCHDL).

The protein belongs to the POU transcription factor family. Class-3 subfamily.

The protein resides in the nucleus. Its function is as follows. Probable transcription factor which exert its primary action widely during early neural development and in a very limited set of neurons in the mature brain. The chain is POU domain, class 3, transcription factor 4 (Pou3f4) from Mesocricetus auratus (Golden hamster).